Consider the following 59-residue polypeptide: Small, acid-soluble spore protein H (59 aa).

The protein belongs to the SspH family.

The protein resides in the spore core. The protein is Small, acid-soluble spore protein H of Alkaliphilus metalliredigens (strain QYMF).